The chain runs to 286 residues: UPF0761 membrane protein KPN78578_41360 (286 aa).

7 consecutive transmembrane segments (helical) span residues 44–64, 74–94, 104–124, 140–160, 183–203, 210–230, and 244–264; these read LLSL…FPMF, FIFA…IEQF, VGAF…DSAL, FAVY…SLAI, LFPL…VPTT, AVIG…AFAL, and VISV…IVLL.

The protein belongs to the UPF0761 family.

The protein resides in the cell inner membrane. The sequence is that of UPF0761 membrane protein KPN78578_41360 from Klebsiella pneumoniae subsp. pneumoniae (strain ATCC 700721 / MGH 78578).